We begin with the raw amino-acid sequence, 142 residues long: uncharacterized protein (142 aa).

This is an uncharacterized protein from Saccharomyces cerevisiae (strain ATCC 204508 / S288c) (Baker's yeast).